A 98-amino-acid chain; its full sequence is Beta-elicitin cinnamomin (98 aa).

Cystine bridges form between cysteine 3–cysteine 71, cysteine 27–cysteine 56, and cysteine 51–cysteine 95. The short motif at 33 to 42 (YSMLTATALP) is the Beak-like motif 1 (ligand binding) element. A Beak-like motif 2 (ligand binding) motif is present at residues 72 to 83 (DLTVPTSGLVLD).

This sequence belongs to the elicitin family.

The protein resides in the secreted. Induces local and distal defense responses (incompatible hypersensitive reaction) in plants from the solanaceae and cruciferae families. Elicits leaf necrosis and causes the accumulation of pathogenesis-related proteins. Might interact with the lipidic molecules of the plasma membrane. Elicitins are able to load, carry, and transfer sterols between membranes. This Phytophthora cinnamomi (Cinnamon fungus) protein is Beta-elicitin cinnamomin.